Here is a 239-residue protein sequence, read N- to C-terminus: Serine protease SplF (239 aa).

The N-terminal stretch at 1 to 36 (MNKNIIIKSIAALTILTSVTGVGTTMVEGIQQTAKA) is a signal peptide. Active-site charge relay system residues include His75, Asp114, and Ser192.

Belongs to the peptidase S1B family.

The protein resides in the secreted. The protein is Serine protease SplF (splF) of Staphylococcus aureus (strain Mu50 / ATCC 700699).